The primary structure comprises 310 residues: Olfactory receptor 4D1 (310 aa).

Topologically, residues methionine 1 to lysine 25 are extracellular. A glycan (N-linked (GlcNAc...) asparagine) is linked at asparagine 5. A helical transmembrane segment spans residues phenylalanine 26–valine 49. Residues threonine 50–threonine 57 lie on the Cytoplasmic side of the membrane. A helical transmembrane segment spans residues proline 58–proline 79. Over lysine 80–glutamine 100 the chain is Extracellular. Cysteine 97 and cysteine 189 are joined by a disulfide. A helical membrane pass occupies residues isoleucine 101–tyrosine 120. Residues aspartate 121–glutamine 139 are Cytoplasmic-facing. The helical transmembrane segment at leucine 140–valine 158 threads the bilayer. The Extracellular segment spans residues glutamine 159–leucine 195. The helical transmembrane segment at glutamate 196 to threonine 219 threads the bilayer. Residues valine 220–lysine 235 are Cytoplasmic-facing. Residues alanine 236 to tyrosine 258 form a helical membrane-spanning segment. Over threonine 259–lysine 269 the chain is Extracellular. A helical transmembrane segment spans residues alanine 270 to leucine 289. At arginine 290–glutamate 310 the chain is on the cytoplasmic side.

The protein belongs to the G-protein coupled receptor 1 family.

It localises to the cell membrane. In terms of biological role, odorant receptor. The polypeptide is Olfactory receptor 4D1 (OR4D1) (Homo sapiens (Human)).